Here is a 652-residue protein sequence, read N- to C-terminus: DNA ligase (652 aa).

NAD(+)-binding positions include 29-33, 78-79, and E107; these read DSEYD and SL. The N6-AMP-lysine intermediate role is filled by K109. R130, E164, K278, and K302 together coordinate NAD(+). Zn(2+) contacts are provided by C395, C398, C413, and C418. The BRCT domain occupies 577–652; it reads VADAALSGLT…VRDEAWLESL (76 aa).

It belongs to the NAD-dependent DNA ligase family. LigA subfamily. Requires Mg(2+) as cofactor. Mn(2+) is required as a cofactor.

The enzyme catalyses NAD(+) + (deoxyribonucleotide)n-3'-hydroxyl + 5'-phospho-(deoxyribonucleotide)m = (deoxyribonucleotide)n+m + AMP + beta-nicotinamide D-nucleotide.. In terms of biological role, DNA ligase that catalyzes the formation of phosphodiester linkages between 5'-phosphoryl and 3'-hydroxyl groups in double-stranded DNA using NAD as a coenzyme and as the energy source for the reaction. It is essential for DNA replication and repair of damaged DNA. This is DNA ligase from Streptococcus pneumoniae serotype 2 (strain D39 / NCTC 7466).